The primary structure comprises 415 residues: Palmitoyl-acyl carrier protein thioesterase, chloroplastic (415 aa).

2 stretches are compositionally biased toward low complexity: residues 1 to 16 and 24 to 41; these read MVAT…LPSA and KLGN…KSTP. The transit peptide at 1 to 60 directs the protein to the chloroplast; the sequence is MVATAASSAFFPLPSADTSSRPGKLGNKPSSLSPLKPKSTPNGGLQVKANASAPPKINGS. Residues 1-81 form a disordered region; sequence MVATAASSAF…QEDAHSAPPP (81 aa). Active-site residues include Asn314, His316, and Cys351.

This sequence belongs to the acyl-ACP thioesterase family.

Its subcellular location is the plastid. The protein localises to the chloroplast. It catalyses the reaction hexadecanoyl-[ACP] + H2O = hexadecanoate + holo-[ACP] + H(+). Plays an essential role in chain termination during de novo fatty acid synthesis. High thioesterase activity for palmitoyl-ACP versus other acyl-ACPs. The chain is Palmitoyl-acyl carrier protein thioesterase, chloroplastic (FATB1) from Cuphea hookeriana (Cigar plant).